We begin with the raw amino-acid sequence, 433 residues long: tRNA-2-methylthio-N(6)-dimethylallyladenosine synthase (433 aa).

In terms of domain architecture, MTTase N-terminal spans 3–118 (KKLFIQTLGC…ISRVIHQEKA (116 aa)). [4Fe-4S] cluster contacts are provided by C12, C49, C81, C150, C154, and C157. The region spanning 136 to 369 (SRNDYKAMVN…QARHKEILEE (234 aa)) is the Radical SAM core domain. A TRAM domain is found at 372 to 433 (QKEVGAIHSV…YRAFLIGEPL (62 aa)).

Belongs to the methylthiotransferase family. MiaB subfamily. In terms of assembly, monomer. It depends on [4Fe-4S] cluster as a cofactor.

It is found in the cytoplasm. It carries out the reaction N(6)-dimethylallyladenosine(37) in tRNA + (sulfur carrier)-SH + AH2 + 2 S-adenosyl-L-methionine = 2-methylsulfanyl-N(6)-dimethylallyladenosine(37) in tRNA + (sulfur carrier)-H + 5'-deoxyadenosine + L-methionine + A + S-adenosyl-L-homocysteine + 2 H(+). Its function is as follows. Catalyzes the methylthiolation of N6-(dimethylallyl)adenosine (i(6)A), leading to the formation of 2-methylthio-N6-(dimethylallyl)adenosine (ms(2)i(6)A) at position 37 in tRNAs that read codons beginning with uridine. This is tRNA-2-methylthio-N(6)-dimethylallyladenosine synthase from Wolinella succinogenes (strain ATCC 29543 / DSM 1740 / CCUG 13145 / JCM 31913 / LMG 7466 / NCTC 11488 / FDC 602W) (Vibrio succinogenes).